The sequence spans 690 residues: Elongation factor G (690 aa).

Residues 8 to 282 (ERVRNIGIAA…AVIDYLPAPV (275 aa)) enclose the tr-type G domain. Residues 17-24 (AHIDAGKT), 81-85 (DTPGH), and 135-138 (NKMD) contribute to the GTP site.

This sequence belongs to the TRAFAC class translation factor GTPase superfamily. Classic translation factor GTPase family. EF-G/EF-2 subfamily.

Its subcellular location is the cytoplasm. Functionally, catalyzes the GTP-dependent ribosomal translocation step during translation elongation. During this step, the ribosome changes from the pre-translocational (PRE) to the post-translocational (POST) state as the newly formed A-site-bound peptidyl-tRNA and P-site-bound deacylated tRNA move to the P and E sites, respectively. Catalyzes the coordinated movement of the two tRNA molecules, the mRNA and conformational changes in the ribosome. The protein is Elongation factor G of Parasynechococcus marenigrum (strain WH8102).